Reading from the N-terminus, the 191-residue chain is Large ribosomal subunit protein bL9 (191 aa).

The interval 150 to 191 is disordered; sequence EAERQAKGESLTSADAIYGVDEDALRPEDFFDPDADRDGDDE. Residues 179-191 show a composition bias toward acidic residues; it reads FFDPDADRDGDDE.

The protein belongs to the bacterial ribosomal protein bL9 family.

In terms of biological role, binds to the 23S rRNA. This Allorhizobium ampelinum (strain ATCC BAA-846 / DSM 112012 / S4) (Agrobacterium vitis (strain S4)) protein is Large ribosomal subunit protein bL9.